Reading from the N-terminus, the 80-residue chain is MSEEEIFNKIKDLIADNFEVDKDSITENTNFMNDLDADSIDLVEFILQLEDEFGAEIPDDEAEKIKTVGDAVSYIKSHQG.

The region spanning Glu4–Gln79 is the Carrier domain. Position 39 is an O-(pantetheine 4'-phosphoryl)serine (Ser39).

Belongs to the acyl carrier protein (ACP) family. 4'-phosphopantetheine is transferred from CoA to a specific serine of apo-ACP by AcpS. This modification is essential for activity because fatty acids are bound in thioester linkage to the sulfhydryl of the prosthetic group.

Its subcellular location is the cytoplasm. It functions in the pathway lipid metabolism; fatty acid biosynthesis. Functionally, carrier of the growing fatty acid chain in fatty acid biosynthesis. In Lactobacillus acidophilus (strain ATCC 700396 / NCK56 / N2 / NCFM), this protein is Acyl carrier protein.